Reading from the N-terminus, the 437-residue chain is Protein disulfide-isomerase tmx3a (437 aa).

Residues 1–21 (MANMRNIILTALLSAIALVSG) form the signal peptide. Residues 22 to 126 (YVEGLDDKFT…IIEFTNRVSG (105 aa)) form the Thioredoxin domain. Residues 22-368 (YVEGLDDKFT…KNTVMSMVET (347 aa)) lie on the Extracellular side of the membrane. Catalysis depends on nucleophile residues cysteine 48 and cysteine 51. A disulfide bridge connects residues cysteine 48 and cysteine 51. An N-linked (GlcNAc...) asparagine glycan is attached at asparagine 308. The chain crosses the membrane as a helical span at residues 369–389 (APVFSCFVLGLPVGVVVLVIY). Residues 390-437 (ATCTAVPADDEKPEEEATASPALDTHGKKAIESQPESTEKTSEAKKED) lie on the Cytoplasmic side of the membrane. The tract at residues 398–437 (DDEKPEEEATASPALDTHGKKAIESQPESTEKTSEAKKED) is disordered. A compositionally biased stretch (basic and acidic residues) spans 414-437 (THGKKAIESQPESTEKTSEAKKED). The Di-lysine motif signature appears at 434 to 437 (KKED).

The protein resides in the endoplasmic reticulum membrane. It catalyses the reaction Catalyzes the rearrangement of -S-S- bonds in proteins.. Its function is as follows. Probable disulfide isomerase, which participates in the folding of proteins containing disulfide bonds. May act as a dithiol oxidase. Acts as a regulator of endoplasmic reticulum-mitochondria contact sites via its ability to regulate redox signals. The polypeptide is Protein disulfide-isomerase tmx3a (tmx3a) (Danio rerio (Zebrafish)).